The primary structure comprises 608 residues: Albumin (608 aa).

An N-terminal signal peptide occupies residues 1–18 (MKWVTFLLLLFVSGSAFS). Residues 19 to 24 (RGVFRR) constitute a propeptide that is removed on maturation. Albumin domains lie at 19–211 (RGVF…GVKE), 212–403 (KALV…EFQP), and 404–601 (LVEE…NLVT). H27 provides a ligand contact to Cu cation. The residue at position 29 (S29) is a Phosphoserine. E30 and D37 together coordinate Ca(2+). A disulfide bridge connects residues C77 and C86. Phosphoserine occurs at positions 82 and 89. A Zn(2+)-binding site is contributed by H91. Cystine bridges form between C99–C115, C114–C125, C148–C193, C192–C201, C224–C270, and C269–C277. At K229 the chain carries N6-succinyllysine. E268 lines the Ca(2+) pocket. Zn(2+) is bound by residues H271 and D273. Positions 273, 276, and 279 each coordinate Ca(2+). 8 disulfides stabilise this stretch: C289–C303, C302–C313, C340–C385, C384–C393, C416–C462, C461–C472, C485–C501, and C500–C511. S297 is modified (phosphoserine). A Phosphoserine modification is found at S443. Phosphothreonine is present on residues T444 and T446. Position 460 is an N6-succinyllysine (K460). S513 bears the Phosphoserine mark. Cystine bridges form between C538–C583 and C582–C591. K543 is modified (N6-succinyllysine). K558 bears the N6-methyllysine mark. T570 carries the post-translational modification Phosphothreonine. N6-succinyllysine is present on K588.

The protein belongs to the ALB/AFP/VDB family. In terms of assembly, part of a complex composed of complement component C3, CLCA1/CLCA3, A2ML1/OH and ALB/serum albumin. Interacts with FCGRT; this interaction regulates ALB homeostasis. Interacts with TASOR. In plasma, occurs in a covalently-linked complex with chromophore-bound alpha-1-microglobulin; this interaction does not prevent fatty acid binding to ALB. Post-translationally, phosphorylated by FAM20C in the extracellular medium. In terms of tissue distribution, plasma. Expressed in the granular cells within the cerebellum.

It is found in the secreted. Binds water, Ca(2+), Na(+), K(+), fatty acids, hormones, bilirubin and drugs. Its main function is the regulation of the colloidal osmotic pressure of blood. Major zinc transporter in plasma, typically binds about 80% of all plasma zinc. Major calcium and magnesium transporter in plasma, binds approximately 45% of circulating calcium and magnesium in plasma. Potentially has more than two calcium-binding sites and might additionally bind calcium in a non-specific manner. The shared binding site between zinc and calcium at residue Asp-273 suggests a crosstalk between zinc and calcium transport in the blood. The rank order of affinity is zinc &gt; calcium &gt; magnesium. Binds to the bacterial siderophore enterobactin and inhibits enterobactin-mediated iron uptake of E.coli from ferric transferrin, and may thereby limit the utilization of iron and growth of enteric bacteria such as E.coli. Does not prevent iron uptake by the bacterial siderophore aerobactin. This is Albumin (Alb) from Mus musculus (Mouse).